Consider the following 226-residue polypeptide: Spermatogenesis-associated protein 25 (226 aa).

The chain crosses the membrane as a helical span at residues 153 to 173; that stretch reads ICILTLAMMIAGIPTVPVPGL.

It belongs to the SPATA25 family. As to expression, expressed strongly in testis, weakly in epididymis and not detected in other tissues.

It localises to the membrane. Functionally, may play a role in spermatogenesis. The sequence is that of Spermatogenesis-associated protein 25 (Spata25) from Mus musculus (Mouse).